Consider the following 172-residue polypeptide: Putative metal-dependent hydrolase OB0782 (172 aa).

Zn(2+)-binding residues include His-64, His-155, and His-159.

The protein belongs to the metal hydrolase YfiT family. In terms of assembly, homodimer. Zn(2+) serves as cofactor.

The protein localises to the cytoplasm. Possible metal-dependent hydrolase. This Oceanobacillus iheyensis (strain DSM 14371 / CIP 107618 / JCM 11309 / KCTC 3954 / HTE831) protein is Putative metal-dependent hydrolase OB0782.